Reading from the N-terminus, the 393-residue chain is MSRQNYIFTSESVSEGHPDKVCDRISDAVLDAFLTEEPEARVACETFATTNRVVIGGEVGLSDQAKLREYMGRIDQIARDCIKDIGYEQDKFHHETVEITNLLHEQSAHIAQGVNAAEGKDEGAGDQGIMFGYATTETPALMPAPIQYSHAILRRLAEVRKNGTEPALGPDAKSQLSVIYRDGMPVGVSSLVLSTQHLDPDLTSADIRAIVEPYIREVLPEGWLSADTVWHVNPTGKFVIGGPDGDAGLTGRKIIVDTYGGAAPHGGGAFSGKDPTKVDRSAAYAARYLAKNVVAAGLADKCTIQLSYAIGVSKPLSIYADTHGTGDIAPAAIEKAIDTVMDLTPRGIRTHLGLNKPIYERTAAYGHFGREPEADGGFSWERTDLAEALKKAV.

ATP is bound at residue histidine 17. Aspartate 19 lines the Mg(2+) pocket. Glutamate 45 is a binding site for K(+). Residues glutamate 58 and glutamine 106 each coordinate L-methionine. The interval 106-116 (QSAHIAQGVNA) is flexible loop. Residues 171 to 173 (DAK), 237 to 238 (KF), aspartate 246, 252 to 253 (RK), alanine 269, and lysine 273 each bind ATP. Aspartate 246 is an L-methionine binding site. An L-methionine-binding site is contributed by lysine 277.

The protein belongs to the AdoMet synthase family. Homotetramer; dimer of dimers. Requires Mg(2+) as cofactor. The cofactor is K(+).

It localises to the cytoplasm. The catalysed reaction is L-methionine + ATP + H2O = S-adenosyl-L-methionine + phosphate + diphosphate. The protein operates within amino-acid biosynthesis; S-adenosyl-L-methionine biosynthesis; S-adenosyl-L-methionine from L-methionine: step 1/1. Catalyzes the formation of S-adenosylmethionine (AdoMet) from methionine and ATP. The overall synthetic reaction is composed of two sequential steps, AdoMet formation and the subsequent tripolyphosphate hydrolysis which occurs prior to release of AdoMet from the enzyme. The protein is S-adenosylmethionine synthase of Ruegeria pomeroyi (strain ATCC 700808 / DSM 15171 / DSS-3) (Silicibacter pomeroyi).